The sequence spans 334 residues: Dihydroorotate dehydrogenase (quinone) (334 aa).

FMN contacts are provided by residues 59–63 (AGLDK) and threonine 83. Lysine 63 provides a ligand contact to substrate. 108–112 (NRMGF) is a binding site for substrate. Residues asparagine 136 and asparagine 169 each contribute to the FMN site. Position 169 (asparagine 169) interacts with substrate. The active-site Nucleophile is serine 172. Asparagine 174 is a binding site for substrate. Residues lysine 214 and threonine 242 each contribute to the FMN site. 243–244 (NT) provides a ligand contact to substrate. FMN is bound by residues glycine 265, glycine 294, and 315 to 316 (YS).

It belongs to the dihydroorotate dehydrogenase family. Type 2 subfamily. As to quaternary structure, monomer. FMN is required as a cofactor.

The protein localises to the cell membrane. The catalysed reaction is (S)-dihydroorotate + a quinone = orotate + a quinol. Its pathway is pyrimidine metabolism; UMP biosynthesis via de novo pathway; orotate from (S)-dihydroorotate (quinone route): step 1/1. In terms of biological role, catalyzes the conversion of dihydroorotate to orotate with quinone as electron acceptor. This Acinetobacter baumannii (strain SDF) protein is Dihydroorotate dehydrogenase (quinone).